A 139-amino-acid polypeptide reads, in one-letter code: Histone H2B (139 aa).

Residues 1 to 10 show a composition bias toward basic and acidic residues; sequence MAPKAAEKKP. Positions 1–47 are disordered; that stretch reads MAPKAAEKKPSTGGKAPAGGKAPAEKKEAGKKTAASGEKKKRTKARK. N6-acetyllysine; alternate is present on residues Lys8 and Lys9. Glycyl lysine isopeptide (Lys-Gly) (interchain with G-Cter in SUMO); alternate cross-links involve residues Lys8 and Lys9. The span at 11-22 shows a compositional bias: low complexity; that stretch reads STGGKAPAGGKA. Residue Lys15 is modified to N6-acetyllysine. At Lys26 the chain carries N6-acetyllysine; alternate. Lys26 participates in a covalent cross-link: Glycyl lysine isopeptide (Lys-Gly) (interchain with G-Cter in SUMO); alternate. A Glycyl lysine isopeptide (Lys-Gly) (interchain with G-Cter in SUMO) cross-link involves residue Lys27. Lys133 participates in a covalent cross-link: Glycyl lysine isopeptide (Lys-Gly) (interchain with G-Cter in ubiquitin).

The protein belongs to the histone H2B family. In terms of assembly, the nucleosome is a histone octamer containing two molecules each of H2A, H2B, H3 and H4 assembled in one H3-H4 heterotetramer and two H2A-H2B heterodimers. The octamer wraps approximately 147 bp of DNA. In terms of processing, monoubiquitinated by the UBC2-BRE1 complex to form H2BK123ub1. H2BK123ub1 gives a specific tag for epigenetic transcriptional activation and is also prerequisite for H3K4me and H3K79me formation. H2BK123ub1 also modulates the formation of double-strand breaks during meiosis and is a prerequisite for DNA-damage checkpoint activation. Post-translationally, acetylated by GCN5 to form H2BK11ac and H2BK16ac. H2BK16ac can also be formed by ESA1. Acetylation of N-terminal lysines and particularly formation of H2BK11acK16ac has a positive effect on transcription. Sumoylation to form H2BK6su or H2BK7su, and probably also H2BK16su or H2BK17su, occurs preferentially near the telomeres and represses gene transcription.

The protein localises to the nucleus. Its subcellular location is the chromosome. Its function is as follows. Core component of nucleosome. Nucleosomes wrap and compact DNA into chromatin, limiting DNA accessibility to the cellular machineries which require DNA as a template. Histones thereby play a central role in transcription regulation, DNA repair, DNA replication and chromosomal stability. DNA accessibility is regulated via a complex set of post-translational modifications of histones, also called histone code, and nucleosome remodeling. The sequence is that of Histone H2B (HTB1) from Coccidioides immitis (strain RS) (Valley fever fungus).